The following is a 129-amino-acid chain: MATIYATGKRKAAIAKVWLTPGNGEMLINGKTLDQWLGGHETLKMKVRLPLEATKQLESMNVKATTLGGGYSAQADALKHGITKALVEFEPSFRAILKPMGLLTRDSRVVERKKPGKKKARRSPQFSKR.

The segment at 107–129 (SRVVERKKPGKKKARRSPQFSKR) is disordered. A compositionally biased stretch (basic residues) spans 114-129 (KPGKKKARRSPQFSKR).

This sequence belongs to the universal ribosomal protein uS9 family.

The polypeptide is Small ribosomal subunit protein uS9 (Sulfurovum sp. (strain NBC37-1)).